Consider the following 253-residue polypeptide: tRNA (guanine-N(1)-)-methyltransferase (253 aa).

Residues G110 and 130–135 (IGDYIL) each bind S-adenosyl-L-methionine.

The protein belongs to the RNA methyltransferase TrmD family. Homodimer.

Its subcellular location is the cytoplasm. The catalysed reaction is guanosine(37) in tRNA + S-adenosyl-L-methionine = N(1)-methylguanosine(37) in tRNA + S-adenosyl-L-homocysteine + H(+). In terms of biological role, specifically methylates guanosine-37 in various tRNAs. This chain is tRNA (guanine-N(1)-)-methyltransferase, found in Carboxydothermus hydrogenoformans (strain ATCC BAA-161 / DSM 6008 / Z-2901).